Here is a 308-residue protein sequence, read N- to C-terminus: uncharacterized protein (308 aa).

Residues 19 to 43 (EPQASGAGPAQTPPPVTVPMTPPSK) form a disordered region. Residues 29-43 (QTPPPVTVPMTPPSK) show a composition bias toward pro residues.

This is an uncharacterized protein from Deinococcus radiodurans (strain ATCC 13939 / DSM 20539 / JCM 16871 / CCUG 27074 / LMG 4051 / NBRC 15346 / NCIMB 9279 / VKM B-1422 / R1).